The primary structure comprises 249 residues: Putative protein SNX29P2 (249 aa).

2 disordered regions span residues 109-171 and 188-249; these read QVTN…SNSW and DVKS…PGFK. Over residues 156-170 the composition is skewed to low complexity; it reads SPFGPNSNGSQSSNS. Acidic residues predominate over residues 193-204; sequence DDEDVDENEDDV. Over residues 226–242 the composition is skewed to polar residues; sequence HSVTQAGVQWHDLSSLQ.

The protein belongs to the sorting nexin family.

The sequence is that of Putative protein SNX29P2 (SNX29P2) from Homo sapiens (Human).